A 196-amino-acid chain; its full sequence is Ribonuclease HII (196 aa).

Residues 9–196 enclose the RNase H type-2 domain; the sequence is GLVCGIDEAG…GPVARQLSLL (188 aa). A divalent metal cation contacts are provided by Asp-15, Glu-16, and Asp-107.

Belongs to the RNase HII family. Requires Mn(2+) as cofactor. The cofactor is Mg(2+).

Its subcellular location is the cytoplasm. It catalyses the reaction Endonucleolytic cleavage to 5'-phosphomonoester.. In terms of biological role, endonuclease that specifically degrades the RNA of RNA-DNA hybrids. The sequence is that of Ribonuclease HII from Dechloromonas aromatica (strain RCB).